A 467-amino-acid polypeptide reads, in one-letter code: Probable glutamate decarboxylase gamma (467 aa).

Residue Lys-278 is modified to N6-(pyridoxal phosphate)lysine.

It belongs to the group II decarboxylase family. Pyridoxal 5'-phosphate serves as cofactor.

The catalysed reaction is L-glutamate + H(+) = 4-aminobutanoate + CO2. This Listeria innocua serovar 6a (strain ATCC BAA-680 / CLIP 11262) protein is Probable glutamate decarboxylase gamma.